The following is a 568-amino-acid chain: MEHIMNPFMSPAYLLGHGPHSHQHVHSHLPSHPQPNAASPASSPGGSSGSGSGSAAGSGTGSGSSLKPRRWGSPPINLAGQFINPATGKKRVQCSICFKTFCDKGALKIHFSAVHLREMHKCTVEGCNMVFSSRRSRNRHSANPNPKLHSPHIRRKISPHDGRTAQQFPVFSPGTAAAAAAVAGRLPVAFPGLLPPPPPHHGHHPYVMFGGQAGLHGLGLLSTGCQDPDSGSVDNEQDADPEDDNDFVYVDMQANSSSPAASSEDQEEHERDNEQDEEMHCSLSLASSSSIAADEERAADQPLDFSLHKRRKSEQDREQEQEQEQEREREAEKEQEQDVESDKEHEPEQEHELEREKRSPSDAFSMDQLLGKRKRHDSTASSSACSTAAASSASSSSASASANPPQTSIKMDLDPDSDSAYMTSRRQMLPLPVLDLEEHHHLRLLQTQMFAAAAAAAATSQAPPTAFLPAGSPVDLAKDSPPMWSLLSEMYRSMLLKTQHQQYNHHHQLQQQHQQEQHHHLTLSHHHQEQHHHLGHHHMGHHHHHHHQHHQQQPQQQSPAATNAPISV.

The segment at 16 to 77 (GHGPHSHQHV…PRRWGSPPIN (62 aa)) is disordered. Positions 19-29 (PHSHQHVHSHL) are enriched in basic residues. A compositionally biased stretch (low complexity) spans 30-45 (PSHPQPNAASPASSPG). A compositionally biased stretch (gly residues) spans 46–62 (GSSGSGSGSAAGSGTGS). C2H2-type zinc fingers lie at residues 92-115 (VQCS…SAVH) and 120-145 (HKCT…ANPN). 4 disordered regions span residues 134 to 157 (RRSR…RRKI), 220 to 364 (LLST…SDAF), 391 to 419 (SSAS…DSDS), and 501 to 568 (QQYN…PISV). Over residues 235–246 (NEQDADPEDDND) the composition is skewed to acidic residues. Residues 253 to 263 (QANSSSPAASS) are compositionally biased toward polar residues. A compositionally biased stretch (low complexity) spans 282-292 (SLSLASSSSIA). Basic and acidic residues predominate over residues 313-360 (SEQDREQEQEQEQEREREAEKEQEQDVESDKEHEPEQEHELEREKRSP). Residues 391–402 (SSASSSSASASA) are compositionally biased toward low complexity. Residues 520–550 (HLTLSHHHQEQHHHLGHHHMGHHHHHHHQHH) are compositionally biased toward basic residues. Polar residues predominate over residues 558–568 (SPAATNAPISV).

As to expression, expressed at low levels in the adult head and very low, but detectable, levels in the body.

Its subcellular location is the nucleus. Functionally, required for the establishment of stable connections between the larval optic nerves, the Bolwig's nerves, and their target cells in the brain during embryonic development. This is Protein disconnected (disco) from Drosophila melanogaster (Fruit fly).